The primary structure comprises 364 residues: Chorismate synthase (364 aa).

Residues 41–60 (MQHDLDRRRPGTSRYTTARR) are disordered. 2 residues coordinate NADP(+): Arg-48 and Arg-54. FMN contacts are provided by residues 125-127 (RSS), 238-239 (NA), Gly-278, 293-297 (KPTSS), and Arg-319.

This sequence belongs to the chorismate synthase family. Homotetramer. FMNH2 is required as a cofactor.

It catalyses the reaction 5-O-(1-carboxyvinyl)-3-phosphoshikimate = chorismate + phosphate. The protein operates within metabolic intermediate biosynthesis; chorismate biosynthesis; chorismate from D-erythrose 4-phosphate and phosphoenolpyruvate: step 7/7. Functionally, catalyzes the anti-1,4-elimination of the C-3 phosphate and the C-6 proR hydrogen from 5-enolpyruvylshikimate-3-phosphate (EPSP) to yield chorismate, which is the branch point compound that serves as the starting substrate for the three terminal pathways of aromatic amino acid biosynthesis. This reaction introduces a second double bond into the aromatic ring system. This Shewanella baltica (strain OS223) protein is Chorismate synthase.